The following is a 330-amino-acid chain: D-alanine--D-alanine ligase (330 aa).

In terms of domain architecture, ATP-grasp spans 120–326; it reads KLWYDALGIP…FKTFLQKAVL (207 aa). Residue 150–205 coordinates ATP; the sequence is AFKQWGGLFVKAACQGSSVGCYKVTSEEELAQAINGAFGYSQQVLVEKAVKPRELE. Mg(2+) is bound by residues D280, E293, and N295.

It belongs to the D-alanine--D-alanine ligase family. Mg(2+) serves as cofactor. It depends on Mn(2+) as a cofactor.

It is found in the cytoplasm. The catalysed reaction is 2 D-alanine + ATP = D-alanyl-D-alanine + ADP + phosphate + H(+). It functions in the pathway cell wall biogenesis; peptidoglycan biosynthesis. Functionally, cell wall formation. The polypeptide is D-alanine--D-alanine ligase (Aliivibrio fischeri (strain MJ11) (Vibrio fischeri)).